The chain runs to 255 residues: MVQKRKDLRRSDAGSAVRAKLHKASTGKAFPVGKRAPLQIRSYAWETPATATTPSGPISITDGTIFMCNTIDPGTGDDQRSRHTTMLYKMSLNVVLWPGATTAQIVGPFRVNFWLVYDAAPTGVVPKLTDIFDVAYPKWGNTWQVSRSNVHRFIVKRKWKVDYQSSGVPVGKRQSSGVEYAPVNNVVECNKFFEKLRVKTEWANTSTGAIGDVKKGALYLCANTRQMPAGDSVTTSCTTMMQGSTRLYFKVLGNQ.

The Bipartite nuclear localization signal motif lies at 1–25; that stretch reads MVQKRKDLRRSDAGSAVRAKLHKAS.

This sequence belongs to the geminiviridae capsid protein family. As to quaternary structure, homomultimer. Interacts with the movement protein. Binds to single-stranded and double-stranded viral DNA.

The protein localises to the virion. It is found in the host nucleus. Encapsidates the viral genome into characteristic twinned ('geminate') particles. Binds the genomic viral ssDNA and shuttles it into and out of the cell nucleus. Plays a role in protection of the genome from degradation, virus acquisition and transmission by insect vectors, infectivity, and systemic movement. The CP of monopartite geminiviruses is absolutely essential for virus movement. This chain is Capsid protein, found in Miscanthus streak virus (isolate 91) (MiSV).